Here is a 210-residue protein sequence, read N- to C-terminus: Potassium-transporting ATPase KdpC subunit (210 aa).

The chain crosses the membrane as a helical span at residues 13-33 (LVTLVLLLVCGLAYPLILTGI).

The protein belongs to the KdpC family. In terms of assembly, the system is composed of three essential subunits: KdpA, KdpB and KdpC.

The protein localises to the cell membrane. Functionally, part of the high-affinity ATP-driven potassium transport (or Kdp) system, which catalyzes the hydrolysis of ATP coupled with the electrogenic transport of potassium into the cytoplasm. This subunit acts as a catalytic chaperone that increases the ATP-binding affinity of the ATP-hydrolyzing subunit KdpB by the formation of a transient KdpB/KdpC/ATP ternary complex. This chain is Potassium-transporting ATPase KdpC subunit, found in Clostridium kluyveri (strain ATCC 8527 / DSM 555 / NBRC 12016 / NCIMB 10680 / K1).